A 191-amino-acid polypeptide reads, in one-letter code: Potassium-transporting ATPase KdpC subunit (191 aa).

A helical transmembrane segment spans residues 6–26; it reads PAILLFILLTLVTGGLYPLLT.

This sequence belongs to the KdpC family. As to quaternary structure, the system is composed of three essential subunits: KdpA, KdpB and KdpC.

It localises to the cell inner membrane. Its function is as follows. Part of the high-affinity ATP-driven potassium transport (or Kdp) system, which catalyzes the hydrolysis of ATP coupled with the electrogenic transport of potassium into the cytoplasm. This subunit acts as a catalytic chaperone that increases the ATP-binding affinity of the ATP-hydrolyzing subunit KdpB by the formation of a transient KdpB/KdpC/ATP ternary complex. This Enterobacter sp. (strain 638) protein is Potassium-transporting ATPase KdpC subunit.